Here is a 468-residue protein sequence, read N- to C-terminus: Cytochrome P450-like protein L532 (468 aa).

The next 2 helical transmembrane spans lie at 22 to 42 (WFAY…FGLI) and 172 to 192 (VTVL…GVDV). Residue cysteine 415 participates in heme binding.

The protein belongs to the cytochrome P450 family. The cofactor is heme.

The protein localises to the host membrane. It is found in the virion. The sequence is that of Cytochrome P450-like protein L532 from Acanthamoeba polyphaga mimivirus (APMV).